A 194-amino-acid polypeptide reads, in one-letter code: Peptidyl-tRNA hydrolase (194 aa).

Tyr-16 contributes to the tRNA binding site. His-21 serves as the catalytic Proton acceptor. Residues Phe-67, Asn-69, and Asn-115 each contribute to the tRNA site.

Belongs to the PTH family. In terms of assembly, monomer.

It localises to the cytoplasm. It carries out the reaction an N-acyl-L-alpha-aminoacyl-tRNA + H2O = an N-acyl-L-amino acid + a tRNA + H(+). In terms of biological role, hydrolyzes ribosome-free peptidyl-tRNAs (with 1 or more amino acids incorporated), which drop off the ribosome during protein synthesis, or as a result of ribosome stalling. Functionally, catalyzes the release of premature peptidyl moieties from peptidyl-tRNA molecules trapped in stalled 50S ribosomal subunits, and thus maintains levels of free tRNAs and 50S ribosomes. The protein is Peptidyl-tRNA hydrolase of Shigella dysenteriae serotype 1 (strain Sd197).